A 446-amino-acid chain; its full sequence is Probable rhamnogalacturonase A (446 aa).

The first 18 residues, 1-18 (MPALPILALALAPLLVNG), serve as a signal peptide directing secretion. Residues C39 and C65 are joined by a disulfide bond. N-linked (GlcNAc...) asparagine glycans are attached at residues N50, N115, and N124. The Proton donor role is filled by D216. The cysteines at positions 218 and 235 are disulfide-linked. N-linked (GlcNAc...) asparagine glycans are attached at residues N236 and N281. The active site involves H291. N318 carries an N-linked (GlcNAc...) asparagine glycan. Disulfide bonds link C341–C347 and C369–C378.

The protein belongs to the glycosyl hydrolase 28 family.

It is found in the secreted. It carries out the reaction Endohydrolysis of alpha-D-GalA-(1-&gt;2)-alpha-L-Rha glycosidic bond in the rhamnogalacturonan I backbone with initial inversion of anomeric configuration releasing oligosaccharides with beta-D-GalA at the reducing end.. Its function is as follows. Pectinolytic enzymes consist of four classes of enzymes: pectine lyase, polygalacturonase, pectin methylesterase and rhamnogalacturonase. Hydrolyzes alpha-D-galacturonopyranosyl-(1,2)-alpha-L-rhamnopyranosyl linkages in the backbone of the hairy regions of pectins. This Aspergillus niger (strain ATCC MYA-4892 / CBS 513.88 / FGSC A1513) protein is Probable rhamnogalacturonase A (rhgA).